An 858-amino-acid polypeptide reads, in one-letter code: MENTTPLRKQYLDIKKNYPEAIVFFRLGDFYETFEEDARIAARELEIVLTSREMGKGLKVPLAGIPYHALDNYLSRLINKGYKVAICEQVTKPGETKGLVQRQVTRLVTPGTVVEPNLLQTKQNNFLLSLYLTEDSCGLAFADISTSEFGCTQTNIGELEAEISRLSPAEIILPKNQSLNLPIHLKATISKLDGYYFEADIAREHLLRHFECQNLSAYGCENMPLAISAAGALLNYLEETQKSSLKQLERLSVYTTADYMQMDSHTLSNLEIFRSSGGNSLKGSLLGILDQTRTAMGGRLLRKFLGQPLLKQSDIEKRLSAVDYFFEESLARTSLAKSLGQIADMERMANRIRQKTILPRELISLKNSLETVSAIHRQFGLMPPPRLAYFLNGLKPLPEMLDIINKTITDDPPSTLGDGKVIRAGFDPEMDKLCSLAGDARTFLSQMETRERERTGIKSLKLGYNRVFGYYIEISNANLGDMPPEFIRKQTLVNAERFITPELKEYENLILNAKERLLEMETGLYEQVLNQLGGFYSALLANAAALAALDVLSAFAEVAVRNSYVRPVFHPENRLDIRKGRHPMVEQGLGYGSFVANDISLSAEDCQIIILTGPNMAGKSTYLKQTALIVLMAQIGSYVPAETAELCLTDRIFTRIGAREDLSAGQSTFMVEMVETASILNTATSRSLLILDEIGRGTSTYDGLAIAQAVVEYIHSQPSLTAKTLFATHYHELVELASYLPRVKNYNIAVSEDRGEVVFLHKIVPGGVDKSYGIHVAKLAGLPKWVIKRAYEVLTELENPAKKQPKSRTCQPQLQLPMTGQTSVLEEEIKELEIESLTPLAALNKLYELKKKAEEQGL.

ATP is bound at residue 613 to 620; that stretch reads GPNMAGKS.

This sequence belongs to the DNA mismatch repair MutS family.

Functionally, this protein is involved in the repair of mismatches in DNA. It is possible that it carries out the mismatch recognition step. This protein has a weak ATPase activity. The polypeptide is DNA mismatch repair protein MutS (Dehalococcoides mccartyi (strain ATCC BAA-2100 / JCM 16839 / KCTC 5957 / BAV1)).